Reading from the N-terminus, the 363-residue chain is Putative serine/threonine-protein kinase gskl-1 (363 aa).

A Protein kinase domain is found at Phe20 to Phe304. Residues Cys26–Val34 and Lys50 each bind ATP. Asp146 (proton acceptor) is an active-site residue. The disordered stretch occupies residues Pro311–Asp363. Positions Thr346–Asp355 are enriched in basic and acidic residues.

The protein belongs to the protein kinase superfamily. Ser/Thr protein kinase family. Expressed during multiple stages of spermatogenesis, in males and hermaphrodites (at protein level).

It localises to the cytoplasm. It is found in the cell projection. The protein resides in the pseudopodium. The enzyme catalyses L-seryl-[protein] + ATP = O-phospho-L-seryl-[protein] + ADP + H(+). The catalysed reaction is L-threonyl-[protein] + ATP = O-phospho-L-threonyl-[protein] + ADP + H(+). In terms of biological role, may be an autophosphorylating tyrosine kinase, a bifunctional (serine/tyrosine-specific) protein kinase, or a serine kinase that is a substrate for an associated tyrosine kinase. Acting in concert with putative serine/threonine-protein kinase gskl-2, required for sister chromatid segregation and spermatid budding during male meiosis. Plays a role in regulating female meiosis II, together with gskl-2. Involved in sperm pseudopod formation and function, together with gskl-2. This is Putative serine/threonine-protein kinase gskl-1 from Caenorhabditis elegans.